A 156-amino-acid chain; its full sequence is Ubiquitin-like protein 4A (156 aa).

Residues 1–76 form the Ubiquitin-like domain; the sequence is MILTVKPLQG…LNLVIRPVGE (76 aa).

In terms of assembly, component of the bag6/bat3 complex.

The protein resides in the cytoplasm. The protein localises to the cytosol. It is found in the nucleus. Its function is as follows. As part of a cytosolic protein quality control complex, the bag6/bat3 complex, maintains misfolded and hydrophobic patches-containing proteins in a soluble state and participates in their proper delivery to the endoplasmic reticulum or alternatively can promote their sorting to the proteasome where they undergo degradation. The bag6/bat3 complex is involved in the post-translational delivery of tail-anchored/type II transmembrane proteins to the endoplasmic reticulum membrane. Similarly, the bag6/bat3 complex also functions as a sorting platform for proteins of the secretory pathway that are mislocalized to the cytosol either delivering them to the proteasome for degradation or to the endoplasmic reticulum. The bag6/bat3 complex also plays a role in the endoplasmic reticulum-associated degradation (ERAD), a quality control mechanism that eliminates unwanted proteins of the endoplasmic reticulum through their retrotranslocation to the cytosol and their targeting to the proteasome. It maintains these retrotranslocated proteins in an unfolded yet soluble state condition in the cytosol to ensure their proper delivery to the proteasome. The protein is Ubiquitin-like protein 4A (ubl4a) of Anoplopoma fimbria (Sablefish).